A 391-amino-acid polypeptide reads, in one-letter code: Formate-dependent phosphoribosylglycinamide formyltransferase (391 aa).

Residues 20–21 (EL) and Glu80 each bind N(1)-(5-phospho-beta-D-ribosyl)glycinamide. ATP is bound by residues Arg112, Lys153, 158–163 (SSGKGQ), 193–196 (EGFI), and Glu201. The region spanning 117-306 (RLAAETLGLP…EFALHVRAIL (190 aa)) is the ATP-grasp domain. Glu265 and Glu277 together coordinate Mg(2+). N(1)-(5-phospho-beta-D-ribosyl)glycinamide-binding positions include Asp284, Lys354, and 361–362 (RR).

It belongs to the PurK/PurT family. In terms of assembly, homodimer.

The catalysed reaction is N(1)-(5-phospho-beta-D-ribosyl)glycinamide + formate + ATP = N(2)-formyl-N(1)-(5-phospho-beta-D-ribosyl)glycinamide + ADP + phosphate + H(+). It participates in purine metabolism; IMP biosynthesis via de novo pathway; N(2)-formyl-N(1)-(5-phospho-D-ribosyl)glycinamide from N(1)-(5-phospho-D-ribosyl)glycinamide (formate route): step 1/1. Involved in the de novo purine biosynthesis. Catalyzes the transfer of formate to 5-phospho-ribosyl-glycinamide (GAR), producing 5-phospho-ribosyl-N-formylglycinamide (FGAR). Formate is provided by PurU via hydrolysis of 10-formyl-tetrahydrofolate. This Shewanella oneidensis (strain ATCC 700550 / JCM 31522 / CIP 106686 / LMG 19005 / NCIMB 14063 / MR-1) protein is Formate-dependent phosphoribosylglycinamide formyltransferase.